The chain runs to 892 residues: Transposase for transposon Tn4556 (892 aa).

Over residues 1–12 the composition is skewed to basic and acidic residues; it reads MGGRAGLDDGRG. Positions 1–63 are disordered; that stretch reads MGGRAGLDDG…GQPARDAEHR (63 aa). Positions 23–34 are enriched in low complexity; that stretch reads VAEGAAGAAAWG.

The protein belongs to the transposase 7 family.

Its function is as follows. Required for transposition of transposon Tn4556. This Streptomyces fradiae (Streptomyces roseoflavus) protein is Transposase for transposon Tn4556 (tnpA).